We begin with the raw amino-acid sequence, 478 residues long: Aspartyl/glutamyl-tRNA(Asn/Gln) amidotransferase subunit B 2 (478 aa).

This sequence belongs to the GatB/GatE family. GatB subfamily. As to quaternary structure, heterotrimer of A, B and C subunits.

The catalysed reaction is L-glutamyl-tRNA(Gln) + L-glutamine + ATP + H2O = L-glutaminyl-tRNA(Gln) + L-glutamate + ADP + phosphate + H(+). It catalyses the reaction L-aspartyl-tRNA(Asn) + L-glutamine + ATP + H2O = L-asparaginyl-tRNA(Asn) + L-glutamate + ADP + phosphate + 2 H(+). Functionally, allows the formation of correctly charged Asn-tRNA(Asn) or Gln-tRNA(Gln) through the transamidation of misacylated Asp-tRNA(Asn) or Glu-tRNA(Gln) in organisms which lack either or both of asparaginyl-tRNA or glutaminyl-tRNA synthetases. The reaction takes place in the presence of glutamine and ATP through an activated phospho-Asp-tRNA(Asn) or phospho-Glu-tRNA(Gln). The protein is Aspartyl/glutamyl-tRNA(Asn/Gln) amidotransferase subunit B 2 (gatB2) of Clostridium acetobutylicum (strain ATCC 824 / DSM 792 / JCM 1419 / IAM 19013 / LMG 5710 / NBRC 13948 / NRRL B-527 / VKM B-1787 / 2291 / W).